The following is a 156-amino-acid chain: Probable cyclic pyranopterin monophosphate synthase (156 aa).

Residues 73 to 75 (LCH) and 109 to 110 (ME) each bind substrate. Aspartate 124 is an active-site residue.

The protein belongs to the MoaC family. Homohexamer; trimer of dimers.

It carries out the reaction (8S)-3',8-cyclo-7,8-dihydroguanosine 5'-triphosphate = cyclic pyranopterin phosphate + diphosphate. It participates in cofactor biosynthesis; molybdopterin biosynthesis. Catalyzes the conversion of (8S)-3',8-cyclo-7,8-dihydroguanosine 5'-triphosphate to cyclic pyranopterin monophosphate (cPMP). In Pyrococcus furiosus (strain ATCC 43587 / DSM 3638 / JCM 8422 / Vc1), this protein is Probable cyclic pyranopterin monophosphate synthase.